The chain runs to 244 residues: High frequency lysogenization protein HflD homolog (244 aa).

This sequence belongs to the HflD family.

It localises to the cytoplasm. The protein localises to the cell inner membrane. In Acinetobacter baumannii (strain ATCC 17978 / DSM 105126 / CIP 53.77 / LMG 1025 / NCDC KC755 / 5377), this protein is High frequency lysogenization protein HflD homolog.